Here is a 79-residue protein sequence, read N- to C-terminus: UPF0154 protein SAK_1616 (79 aa).

Residues 5–25 traverse the membrane as a helical segment; that stretch reads IWILLIIVALFGGLVGGIFIA.

Belongs to the UPF0154 family.

The protein resides in the cell membrane. This is UPF0154 protein SAK_1616 from Streptococcus agalactiae serotype Ia (strain ATCC 27591 / A909 / CDC SS700).